A 277-amino-acid polypeptide reads, in one-letter code: MALKHFNPITPGQRQLVIVDRSELYKGKPVKSLTEGLSKKGGRNNTGRITVRFQGGGHKRSYRFIDFKRRKLDVVGTVERLEYDPNRTAFIALIRYTDGELAYILAPQRLAVGDQVVAGNSVDVKPGNAMPLSSMPVGTIIHNVELMPGKGGQIARSAGTYAQLVGRDQGMAILRLNSGEQRLVSGACFASVGAVSNPDHGNINDGKAGRSVWRGKRPHVRGVAMNPVDHPHGGGEGRTSGGRHPVTPWGKPTKGKKTRSNKATDKFIMRSRHQRKK.

Positions 222-277 are disordered; it reads GVAMNPVDHPHGGGEGRTSGGRHPVTPWGKPTKGKKTRSNKATDKFIMRSRHQRKK.

It belongs to the universal ribosomal protein uL2 family. Part of the 50S ribosomal subunit. Forms a bridge to the 30S subunit in the 70S ribosome.

Functionally, one of the primary rRNA binding proteins. Required for association of the 30S and 50S subunits to form the 70S ribosome, for tRNA binding and peptide bond formation. It has been suggested to have peptidyltransferase activity; this is somewhat controversial. Makes several contacts with the 16S rRNA in the 70S ribosome. The polypeptide is Large ribosomal subunit protein uL2 (Brucella melitensis biotype 1 (strain ATCC 23456 / CCUG 17765 / NCTC 10094 / 16M)).